A 247-amino-acid polypeptide reads, in one-letter code: Virulence plasmid protein pGP6-D (247 aa).

Belongs to the UPF0137 (pGP6-D) family.

The protein is Virulence plasmid protein pGP6-D of Chlamydia trachomatis.